A 792-amino-acid chain; its full sequence is LPS-assembly protein LptD (792 aa).

The first 22 residues, 1 to 22 (MYRVLRLLPLPLSVAISLSALA), serve as a signal peptide directing secretion.

This sequence belongs to the LptD family. In terms of assembly, component of the lipopolysaccharide transport and assembly complex. Interacts with LptE and LptA.

The protein resides in the cell outer membrane. Functionally, together with LptE, is involved in the assembly of lipopolysaccharide (LPS) at the surface of the outer membrane. This chain is LPS-assembly protein LptD, found in Xylella fastidiosa (strain Temecula1 / ATCC 700964).